A 296-amino-acid chain; its full sequence is Porphobilinogen deaminase (296 aa).

Cys235 bears the S-(dipyrrolylmethanemethyl)cysteine mark.

It belongs to the HMBS family. As to quaternary structure, monomer. The cofactor is dipyrromethane.

The enzyme catalyses 4 porphobilinogen + H2O = hydroxymethylbilane + 4 NH4(+). It participates in porphyrin-containing compound metabolism; protoporphyrin-IX biosynthesis; coproporphyrinogen-III from 5-aminolevulinate: step 2/4. Functionally, tetrapolymerization of the monopyrrole PBG into the hydroxymethylbilane pre-uroporphyrinogen in several discrete steps. In Alkaliphilus oremlandii (strain OhILAs) (Clostridium oremlandii (strain OhILAs)), this protein is Porphobilinogen deaminase.